We begin with the raw amino-acid sequence, 836 residues long: ATP-binding cassette sub-family B member 6 (836 aa).

The Lumenal segment spans residues 1–26 (MVTVGNYCEAEGPAGPAWTQNGLSPC). The segment at 1 to 205 (MVTVGNYCEA…SGGLFILGLW (205 aa)) is required for the lysosomal targeting. A required for ATPase activity region spans residues 1–236 (MVTVGNYCEA…RNQGRSTDPR (236 aa)). A disulfide bond links Cys-8 and Cys-26. A helical membrane pass occupies residues 27 to 47 (FFYTLVPSTLMTLGVLALVLV). Residues 48–72 (LPCRRREVPAGTEELSWAAGPRVAP) are Cytoplasmic-facing. A helical transmembrane segment spans residues 73-93 (YALQLSLAILQMALPLASLAG). Residues 94–106 (RVGTARGVRLPGY) lie on the Lumenal side of the membrane. A helical membrane pass occupies residues 107–127 (LLLASVLESLASACGLWLLVV). Topologically, residues 128–147 (ERSQARQSLAMGVWMKFRHS) are cytoplasmic. Residues 148 to 168 (LGLLLLWTVTFAAENLVLVSW) form a helical membrane-spanning segment. Topologically, residues 169-185 (NSPQWWWSRADLGQQVQ) are lumenal. The chain crosses the membrane as a helical span at residues 186-206 (FGLWVLRYMTSGGLFILGLWA). Topologically, residues 207-264 (PGLRPQSYTLHVNEEDQDGGRNQGRSTDPRSTWRDLGRKLRLLSGYLWPRGSPSLQLT) are cytoplasmic. The chain crosses the membrane as a helical span at residues 265 to 285 (VLLCMGLMGLDRALNVLVPIF). Residues 265-556 (VLLCMGLMGL…FGTYYRMIQT (292 aa)) form the ABC transmembrane type-1 domain. The Lumenal portion of the chain corresponds to 286-305 (YRDIVNLLTSKAPWSSLAWT). A helical membrane pass occupies residues 306-326 (VTTYVFLKFLQGGGTGSTGFV). At 327–375 (SNLRTFLWIRVQQFTSRGVELRLFSHLHELSLRWHLGRRTGEVLRIVDR) the chain is on the cytoplasmic side. The chain crosses the membrane as a helical span at residues 376–396 (GTSSVTGLLSYLVFNIIPTLA). Position 397 (Asp-397) is a topological domain, lumenal. Residues 398 to 418 (IIIGIIYFSMFFNAWFGLIVF) form a helical membrane-spanning segment. Residues 419–499 (LCMSLYLILT…STASLVLLNQ (81 aa)) are Cytoplasmic-facing. A helical membrane pass occupies residues 500-520 (TQNMVIGFGLLAGSLLCAYFV). Residues 521–529 (SERRLQVGD) lie on the Lumenal side of the membrane. The helical transmembrane segment at 530–550 (FVLFGTYITQLYMPLNWFGTY) threads the bilayer. Residues 551 to 836 (YRMIQTNFID…QGQETVPEDS (286 aa)) lie on the Cytoplasmic side of the membrane. The ABC transporter domain maps to 590–824 (VEFENVHFSY…GGVYAEMWQL (235 aa)). Residues Tyr-599 and 623–634 (GPSGAGKSTILR) contribute to the ATP site.

The protein belongs to the ABC transporter superfamily. ABCB family. Heavy Metal importer (TC 3.A.1.210) subfamily. As to quaternary structure, homodimer. Post-translationally, N-glycosylated. In terms of tissue distribution, ubiquitously expressed. Highly expressed in testis by meiotic pachytene spermatocytes and post-meiotic early spermatids.

It localises to the cell membrane. It is found in the mitochondrion outer membrane. The protein resides in the endoplasmic reticulum membrane. The protein localises to the golgi apparatus membrane. Its subcellular location is the endosome membrane. It localises to the lysosome membrane. It is found in the late endosome membrane. The protein resides in the early endosome membrane. The protein localises to the secreted. Its subcellular location is the extracellular exosome. It localises to the mitochondrion. It is found in the endosome. The protein resides in the multivesicular body membrane. The protein localises to the melanosome membrane. It catalyses the reaction heme b(in) + ATP + H2O = heme b(out) + ADP + phosphate + H(+). The enzyme catalyses coproporphyrin III(in) + ATP + H2O = coproporphyrin III(out) + ADP + phosphate + H(+). It carries out the reaction pheophorbide a(in) + ATP + H2O = pheophorbide a(out) + ADP + phosphate + H(+). The catalysed reaction is coproporphyrinogen III(in) + ATP + H2O = coproporphyrinogen III(out) + ADP + phosphate + H(+). It catalyses the reaction protoporphyrin IX(in) + ATP + H2O = protoporphyrin IX(out) + ADP + phosphate + H(+). The enzyme catalyses coproporphyrin I(in) + ATP + H2O = coproporphyrin I(out) + ADP + phosphate + H(+). It carries out the reaction uroporphyrin I(in) + ATP + H2O = uroporphyrin I(out) + ADP + phosphate + H(+). The catalysed reaction is uroporphyrin III(in) + ATP + H2O = uroporphyrin III(out) + ADP + phosphate + H(+). Its function is as follows. ATP-dependent transporter that catalyzes the transport of a broad-spectrum of porphyrins from the cytoplasm to the extracellular space through the plasma membrane or into the vesicle lumen. May also function as an ATP-dependent importer of porphyrins from the cytoplasm into the mitochondria, in turn may participate in the de novo heme biosynthesis regulation and in the coordination of heme and iron homeostasis during phenylhydrazine stress. May play a key role in the early steps of melanogenesis producing PMEL amyloid fibrils. In vitro, it confers to cells a resistance to toxic metal such as arsenic and cadmium and against chemotherapeutics agent such as 5-fluorouracil, SN-38 and vincristin. In addition may play a role in the transition metal homeostasis. This is ATP-binding cassette sub-family B member 6 from Rattus norvegicus (Rat).